A 132-amino-acid chain; its full sequence is Glycine cleavage system H protein (132 aa).

The Lipoyl-binding domain occupies 27-109 (FATIGISAFA…FDFGWILKVK (83 aa)). Lysine 68 carries the post-translational modification N6-lipoyllysine.

The protein belongs to the GcvH family. As to quaternary structure, the glycine cleavage system is composed of four proteins: P, T, L and H. (R)-lipoate is required as a cofactor.

The glycine cleavage system catalyzes the degradation of glycine. The H protein shuttles the methylamine group of glycine from the P protein to the T protein. The sequence is that of Glycine cleavage system H protein from Rhodopirellula baltica (strain DSM 10527 / NCIMB 13988 / SH1).